The following is a 469-amino-acid chain: 3-isopropylmalate dehydratase large subunit (469 aa).

Positions 350, 410, and 413 each coordinate [4Fe-4S] cluster.

Belongs to the aconitase/IPM isomerase family. LeuC type 1 subfamily. In terms of assembly, heterodimer of LeuC and LeuD. The cofactor is [4Fe-4S] cluster.

It catalyses the reaction (2R,3S)-3-isopropylmalate = (2S)-2-isopropylmalate. It functions in the pathway amino-acid biosynthesis; L-leucine biosynthesis; L-leucine from 3-methyl-2-oxobutanoate: step 2/4. Its function is as follows. Catalyzes the isomerization between 2-isopropylmalate and 3-isopropylmalate, via the formation of 2-isopropylmaleate. This Brucella melitensis biotype 2 (strain ATCC 23457) protein is 3-isopropylmalate dehydratase large subunit.